We begin with the raw amino-acid sequence, 164 residues long: HTH-type transcriptional regulator IscR (164 aa).

The HTH rrf2-type domain occupies 2 to 131; that stretch reads RLTSKGRYAV…NNITLDELVN (130 aa). The H-T-H motif DNA-binding region spans 28–51; sequence LADISERQGISLSYLEQLFSRLRK. Cys92, Cys98, and Cys104 together coordinate [2Fe-2S] cluster.

[2Fe-2S] cluster serves as cofactor.

Its function is as follows. Regulates the transcription of several operons and genes involved in the biogenesis of Fe-S clusters and Fe-S-containing proteins. This is HTH-type transcriptional regulator IscR from Pectobacterium carotovorum subsp. carotovorum (strain PC1).